The following is a 101-amino-acid chain: Albumin (101 aa).

Albumin domains are found at residues 1–80 (DAEH…AFXY) and 81–101 (ESGA…PDVL). Cu cation is bound at residue His4.

Belongs to the ALB/AFP/VDB family. As to expression, plasma.

The protein resides in the secreted. Functionally, binds water, Ca(2+), Na(+), K(+), fatty acids, hormones, bilirubin and drugs. Its main function is the regulation of the colloidal osmotic pressure of blood. The sequence is that of Albumin (alb) from Neoceratodus forsteri (Australian lungfish).